The primary structure comprises 185 residues: NEDD8-conjugating enzyme UBE2F (185 aa).

The interval Met-1 to Ser-21 is disordered. Residues Met-1–Arg-29 are interaction with uba3. One can recognise a UBC core domain in the interval Val-32 to Arg-185. Cys-116 acts as the Glycyl thioester intermediate in catalysis.

The protein belongs to the ubiquitin-conjugating enzyme family. UBE2F subfamily.

It catalyses the reaction [E1 NEDD8-activating enzyme]-S-[NEDD8 protein]-yl-L-cysteine + [E2 NEDD8-conjugating enzyme]-L-cysteine = [E1 NEDD8-activating enzyme]-L-cysteine + [E2 NEDD8-conjugating enzyme]-S-[NEDD8-protein]-yl-L-cysteine.. The protein operates within protein modification; protein neddylation. In terms of biological role, accepts the ubiquitin-like protein NEDD8 from the UBA3-NAE1 E1 complex and catalyzes its covalent attachment to other proteins. Together with the E3 ubiquitin ligase rnf7/rbx2, specifically neddylates cullin-5 (cul5). Does not neddylate cul1, cul2, cul3, cul4a or cul4b. The polypeptide is NEDD8-conjugating enzyme UBE2F (ube2f) (Xenopus laevis (African clawed frog)).